The primary structure comprises 295 residues: GATA zinc finger domain-containing protein 23 (295 aa).

Over residues 115 to 126 (ASTSKTATSKNV) the composition is skewed to low complexity. The disordered stretch occupies residues 115-240 (ASTSKTATSK…KRGRPSKIQP (126 aa)). A compositionally biased stretch (polar residues) spans 127-145 (ISNIENNTNKSQPLESNDL). Positions 146-163 (TPPSSKSSNSSPSTSPSK) are enriched in low complexity. Residues 164-174 (RVSKSKTRVTK) show a composition bias toward basic residues. The segment covering 181–227 (STSSSGETENLTTTSTADTTATTDTADTTDGTNTRTSNTSSDDTTTE) has biased composition (low complexity). The segment at residues 229 to 241 (TKKRGRPSKIQPD) is a DNA-binding region (a.T hook). Residues 243–270 (CYVCRRTFTSYWRKGIFNDQNEDLCNPC) form a GATA-type zinc finger.

This is GATA zinc finger domain-containing protein 23 (gtaW) from Dictyostelium discoideum (Social amoeba).